A 139-amino-acid polypeptide reads, in one-letter code: ATP synthase epsilon chain (139 aa).

It belongs to the ATPase epsilon chain family. In terms of assembly, F-type ATPases have 2 components, CF(1) - the catalytic core - and CF(0) - the membrane proton channel. CF(1) has five subunits: alpha(3), beta(3), gamma(1), delta(1), epsilon(1). CF(0) has three main subunits: a, b and c.

Its subcellular location is the cell inner membrane. Produces ATP from ADP in the presence of a proton gradient across the membrane. In Marinomonas sp. (strain MWYL1), this protein is ATP synthase epsilon chain.